The primary structure comprises 306 residues: Peroxisome biogenesis factor 2 (306 aa).

Topologically, residues 1 to 15 (MAASENNMEEINPVL) are peroxisomal matrix. Residues 16–42 (RISQLDAIELNKALEQLIWSQFSSCFQ) traverse the membrane as a helical segment. The Cytoplasmic portion of the chain corresponds to 43–48 (GFKPGL). The helical transmembrane segment at 49–74 (LTRFEPEIKASLCLFLWRYTIYTKNA) threads the bilayer. Over 75 to 98 (TVGQTILNMQYKNDLAVTKKYRPL) the chain is Peroxisomal matrix. The helical transmembrane segment at 99–125 (NKQQKVWFALFLVGGKWLEERSFDLFS) threads the bilayer. Topologically, residues 126–134 (NHPFGASFQ) are cytoplasmic. A helical membrane pass occupies residues 135–161 (RTKYFLNAISGLLKFGALLNFLIFLQQ). Residues 162–188 (GKFATLTERLLGIRSVFSRPQDVRQVG) lie on the Peroxisomal matrix side of the membrane. A helical transmembrane segment spans residues 189–212 (FEYMNREILWHGFAEFLIFLLPLI). Topologically, residues 213-306 (NTQKLKSKLF…KIEISEVHTL (94 aa)) are cytoplasmic. Residues Cys-245, Cys-248, Cys-260, His-262, Cys-265, Cys-268, Cys-281, and Cys-284 each coordinate Zn(2+). The RING-type zinc finger occupies 245–285 (CCLCGEWPAMPHTIGCSHVFCYYCIKSNYMSDMYFTCPKCS).

The protein belongs to the pex2/pex10/pex12 family. Component of the PEX2-PEX10-PEX12 retrotranslocation channel.

The protein localises to the peroxisome membrane. The enzyme catalyses [E2 ubiquitin-conjugating enzyme]-S-ubiquitinyl-L-cysteine + [acceptor protein]-L-cysteine = [E2 ubiquitin-conjugating enzyme]-L-cysteine + [acceptor protein]-S-ubiquitinyl-L-cysteine.. It carries out the reaction S-ubiquitinyl-[E2 ubiquitin-conjugating enzyme]-L-cysteine + [acceptor protein]-L-lysine = [E2 ubiquitin-conjugating enzyme]-L-cysteine + N(6)-ubiquitinyl-[acceptor protein]-L-lysine.. Its pathway is protein modification; protein ubiquitination. Its function is as follows. E3 ubiquitin-protein ligase component of a retrotranslocation channel required for peroxisome organization by mediating export of the PEX5 receptor from peroxisomes to the cytosol, thereby promoting PEX5 recycling. The retrotranslocation channel is composed of PEX2, PEX10 and PEX12; each subunit contributing transmembrane segments that coassemble into an open channel that specifically allows the passage of PEX5 through the peroxisomal membrane. PEX2 also regulates peroxisome organization by acting as a E3 ubiquitin-protein ligase. The sequence is that of Peroxisome biogenesis factor 2 from Xenopus laevis (African clawed frog).